A 289-amino-acid polypeptide reads, in one-letter code: Phosphatidylserine decarboxylase proenzyme (289 aa).

Active-site charge relay system; for autoendoproteolytic cleavage activity residues include Asp89, His146, and Ser252. Ser252 functions as the Schiff-base intermediate with substrate; via pyruvic acid; for decarboxylase activity in the catalytic mechanism. Pyruvic acid (Ser); by autocatalysis is present on Ser252.

The protein belongs to the phosphatidylserine decarboxylase family. PSD-B subfamily. Prokaryotic type I sub-subfamily. As to quaternary structure, heterodimer of a large membrane-associated beta subunit and a small pyruvoyl-containing alpha subunit. It depends on pyruvate as a cofactor. Post-translationally, is synthesized initially as an inactive proenzyme. Formation of the active enzyme involves a self-maturation process in which the active site pyruvoyl group is generated from an internal serine residue via an autocatalytic post-translational modification. Two non-identical subunits are generated from the proenzyme in this reaction, and the pyruvate is formed at the N-terminus of the alpha chain, which is derived from the carboxyl end of the proenzyme. The autoendoproteolytic cleavage occurs by a canonical serine protease mechanism, in which the side chain hydroxyl group of the serine supplies its oxygen atom to form the C-terminus of the beta chain, while the remainder of the serine residue undergoes an oxidative deamination to produce ammonia and the pyruvoyl prosthetic group on the alpha chain. During this reaction, the Ser that is part of the protease active site of the proenzyme becomes the pyruvoyl prosthetic group, which constitutes an essential element of the active site of the mature decarboxylase.

The protein resides in the cell membrane. The catalysed reaction is a 1,2-diacyl-sn-glycero-3-phospho-L-serine + H(+) = a 1,2-diacyl-sn-glycero-3-phosphoethanolamine + CO2. Its pathway is phospholipid metabolism; phosphatidylethanolamine biosynthesis; phosphatidylethanolamine from CDP-diacylglycerol: step 2/2. Functionally, catalyzes the formation of phosphatidylethanolamine (PtdEtn) from phosphatidylserine (PtdSer). The sequence is that of Phosphatidylserine decarboxylase proenzyme from Shewanella sp. (strain W3-18-1).